The following is a 669-amino-acid chain: DNA ligase (669 aa).

NAD(+)-binding positions include 34 to 38, 83 to 84, and Glu-114; these read DAEYD and SL. Lys-116 serves as the catalytic N6-AMP-lysine intermediate. NAD(+) contacts are provided by Arg-137, Glu-171, Lys-287, and Lys-311. Residues Cys-405, Cys-408, Cys-423, and Cys-428 each contribute to the Zn(2+) site. One can recognise a BRCT domain in the interval 591–669; that stretch reads NVESYFAGKT…EERFLQELNK (79 aa).

Belongs to the NAD-dependent DNA ligase family. LigA subfamily. It depends on Mg(2+) as a cofactor. Mn(2+) serves as cofactor.

It catalyses the reaction NAD(+) + (deoxyribonucleotide)n-3'-hydroxyl + 5'-phospho-(deoxyribonucleotide)m = (deoxyribonucleotide)n+m + AMP + beta-nicotinamide D-nucleotide.. In terms of biological role, DNA ligase that catalyzes the formation of phosphodiester linkages between 5'-phosphoryl and 3'-hydroxyl groups in double-stranded DNA using NAD as a coenzyme and as the energy source for the reaction. It is essential for DNA replication and repair of damaged DNA. The sequence is that of DNA ligase from Bacillus cereus (strain B4264).